Consider the following 83-residue polypeptide: Small ribosomal subunit protein bS21 (83 aa).

The tract at residues 40–83 is disordered; sequence TPMDERRRKARSASKRNKVKWRYSNKSEETASETAETPASAPEA. The segment covering 47 to 62 has biased composition (basic residues); the sequence is RKARSASKRNKVKWRY. Residues 71–83 show a composition bias toward low complexity; it reads SETAETPASAPEA.

Belongs to the bacterial ribosomal protein bS21 family.

In Akkermansia muciniphila (strain ATCC BAA-835 / DSM 22959 / JCM 33894 / BCRC 81048 / CCUG 64013 / CIP 107961 / Muc), this protein is Small ribosomal subunit protein bS21.